A 303-amino-acid chain; its full sequence is Glycine--tRNA ligase alpha subunit (303 aa).

The protein belongs to the class-II aminoacyl-tRNA synthetase family. In terms of assembly, tetramer of two alpha and two beta subunits.

It is found in the cytoplasm. The catalysed reaction is tRNA(Gly) + glycine + ATP = glycyl-tRNA(Gly) + AMP + diphosphate. The sequence is that of Glycine--tRNA ligase alpha subunit from Streptococcus equi subsp. equi (strain 4047).